The sequence spans 124 residues: Fluoride-specific ion channel FluC (124 aa).

A run of 4 helical transmembrane segments spans residues 4 to 24 (YLVI…TGVY), 36 to 56 (GTLI…ILFL), 63 to 83 (PLWR…LSSI), and 100 to 120 (LLNI…GIVL). Residues glycine 75 and threonine 78 each contribute to the Na(+) site.

The protein belongs to the fluoride channel Fluc/FEX (TC 1.A.43) family.

It localises to the cell inner membrane. It catalyses the reaction fluoride(in) = fluoride(out). With respect to regulation, na(+) is not transported, but it plays an essential structural role and its presence is essential for fluoride channel function. Functionally, fluoride-specific ion channel. Important for reducing fluoride concentration in the cell, thus reducing its toxicity. This is Fluoride-specific ion channel FluC from Sulfurihydrogenibium sp. (strain YO3AOP1).